The sequence spans 329 residues: GTP 3',8-cyclase (329 aa).

In terms of domain architecture, Radical SAM core spans 1-229 (MNQVDYLRIS…EGYVRGNGPA (229 aa)). Arg-8 contributes to the GTP binding site. Residues Cys-15 and Cys-19 each coordinate [4Fe-4S] cluster. Tyr-21 contacts S-adenosyl-L-methionine. Position 22 (Cys-22) interacts with [4Fe-4S] cluster. A GTP-binding site is contributed by Arg-60. Gly-64 is a binding site for S-adenosyl-L-methionine. Thr-91 contributes to the GTP binding site. Residue Ser-115 participates in S-adenosyl-L-methionine binding. Residue Lys-155 coordinates GTP. Position 189 (Met-189) interacts with S-adenosyl-L-methionine. [4Fe-4S] cluster-binding residues include Cys-252 and Cys-255. GTP is bound at residue 257–259 (RVR). Cys-269 provides a ligand contact to [4Fe-4S] cluster.

This sequence belongs to the radical SAM superfamily. MoaA family. Monomer and homodimer. [4Fe-4S] cluster is required as a cofactor.

It catalyses the reaction GTP + AH2 + S-adenosyl-L-methionine = (8S)-3',8-cyclo-7,8-dihydroguanosine 5'-triphosphate + 5'-deoxyadenosine + L-methionine + A + H(+). It participates in cofactor biosynthesis; molybdopterin biosynthesis. Functionally, catalyzes the cyclization of GTP to (8S)-3',8-cyclo-7,8-dihydroguanosine 5'-triphosphate. The polypeptide is GTP 3',8-cyclase (Cyanothece sp. (strain PCC 7425 / ATCC 29141)).